Consider the following 1495-residue polypeptide: Pregnancy zone protein (1495 aa).

A signal peptide spans 1 to 24; it reads MRRNQLPTPAFLLLFLLLPRDATT. A disulfide bridge connects residues cysteine 48 and cysteine 86. N-linked (GlcNAc...) asparagine glycosylation is found at asparagine 55 and asparagine 157. 2 disulfide bridges follow: cysteine 249–cysteine 298 and cysteine 267–cysteine 286. N-linked (GlcNAc...) asparagine glycans are attached at residues asparagine 382, asparagine 405, and asparagine 412. The cysteines at positions 469 and 562 are disulfide-linked. Asparagine 568 is a glycosylation site (N-linked (GlcNAc...) asparagine). Cystine bridges form between cysteine 594/cysteine 783, cysteine 642/cysteine 689, cysteine 833/cysteine 861, cysteine 859/cysteine 895, cysteine 933/cysteine 1339, and cysteine 1092/cysteine 1140. The segment at 686–744 is bait region; it reads PRFCQEFQHYPAMGGVAPQALAVAASGPGSSFRAMGVPMMGLDYSDEINQVVEVRETVR. Asparagine 881 and asparagine 942 each carry an N-linked (GlcNAc...) asparagine glycan. A cross-link (isoglutamyl cysteine thioester (Cys-Gln)) is located at residues 984 to 987; that stretch reads CGEQ. The N-linked (GlcNAc...) asparagine glycan is linked to asparagine 1003. N-linked (GlcNAc...) asparagine glycosylation is found at asparagine 1385 and asparagine 1443.

Belongs to the protease inhibitor I39 (alpha-2-macroglobulin) family. In terms of tissue distribution, highest expression in liver, medium expression in ovary, heart and stomach. Low expression in lung, kidney and uterus. Protein found in plasma.

Its subcellular location is the secreted. Is able to inhibit all four classes of proteinases by a unique 'trapping' mechanism. This protein has a peptide stretch, called the 'bait region' which contains specific cleavage sites for different proteinases. When a proteinase cleaves the bait region, a conformational change is induced in the protein which traps the proteinase. The entrapped enzyme remains active against low molecular weight substrates (activity against high molecular weight substrates is greatly reduced). Following cleavage in the bait region, a thioester bond is hydrolyzed and mediates the covalent binding of the protein to the proteinase. The chain is Pregnancy zone protein (Pzp) from Mus musculus (Mouse).